A 133-amino-acid polypeptide reads, in one-letter code: Small ribosomal subunit protein uS8c (133 aa).

2 disordered regions span residues 1–23 and 44–133; these read MGND…GAET and FSGN…HVWR. Composition is skewed to polar residues over residues 12-23 and 55-66; these read APRNASSRGAET and TNRFPVSTSKYQ. Residues 67–81 show a composition bias toward basic residues; the sequence is GRTRKARITTRRRVS. The segment covering 114–133 has biased composition (basic and acidic residues); it reads TDREARQKRIGGEAPRHVWR.

Belongs to the universal ribosomal protein uS8 family. Part of the 30S ribosomal subunit.

It is found in the plastid. The protein resides in the chloroplast. Its function is as follows. One of the primary rRNA binding proteins, it binds directly to 16S rRNA central domain where it helps coordinate assembly of the platform of the 30S subunit. This Selaginella uncinata (Blue spike-moss) protein is Small ribosomal subunit protein uS8c (rps8).